Reading from the N-terminus, the 118-residue chain is Altered inheritance of mitochondria protein 26, mitochondrial (118 aa).

3 helical membrane passes run 7 to 27 (EHLLLSQLKGSFFLLLLAYFF), 41 to 61 (LAVTPGAITIAIAIATDSIPA), and 98 to 118 (FLFCLGSARFCISFPCFGLSI).

The protein localises to the mitochondrion membrane. Involved in selective mitochondria autophagy (mitophagy). The sequence is that of Altered inheritance of mitochondria protein 26, mitochondrial (AIM26) from Saccharomyces cerevisiae (strain ATCC 204508 / S288c) (Baker's yeast).